The chain runs to 342 residues: Ketol-acid reductoisomerase (NADP(+)) (342 aa).

The region spanning 2-182 (AEMFYDDDAD…GGLRAGGIKT (181 aa)) is the KARI N-terminal Rossmann domain. NADP(+) contacts are provided by residues 25–28 (FGSQ), Lys48, Ser51, Ser53, and 83–86 (DHLQ). His108 is a catalytic residue. Gly134 lines the NADP(+) pocket. In terms of domain architecture, KARI C-terminal knotted spans 183–328 (TFTEETETDL…RELRKLMAWV (146 aa)). 4 residues coordinate Mg(2+): Asp191, Glu195, Glu227, and Glu231. Residue Ser252 participates in substrate binding.

This sequence belongs to the ketol-acid reductoisomerase family. Mg(2+) is required as a cofactor.

The enzyme catalyses (2R)-2,3-dihydroxy-3-methylbutanoate + NADP(+) = (2S)-2-acetolactate + NADPH + H(+). It carries out the reaction (2R,3R)-2,3-dihydroxy-3-methylpentanoate + NADP(+) = (S)-2-ethyl-2-hydroxy-3-oxobutanoate + NADPH + H(+). It functions in the pathway amino-acid biosynthesis; L-isoleucine biosynthesis; L-isoleucine from 2-oxobutanoate: step 2/4. The protein operates within amino-acid biosynthesis; L-valine biosynthesis; L-valine from pyruvate: step 2/4. Its function is as follows. Involved in the biosynthesis of branched-chain amino acids (BCAA). Catalyzes an alkyl-migration followed by a ketol-acid reduction of (S)-2-acetolactate (S2AL) to yield (R)-2,3-dihydroxy-isovalerate. In the isomerase reaction, S2AL is rearranged via a Mg-dependent methyl migration to produce 3-hydroxy-3-methyl-2-ketobutyrate (HMKB). In the reductase reaction, this 2-ketoacid undergoes a metal-dependent reduction by NADPH to yield (R)-2,3-dihydroxy-isovalerate. This is Ketol-acid reductoisomerase (NADP(+)) from Kineococcus radiotolerans (strain ATCC BAA-149 / DSM 14245 / SRS30216).